The chain runs to 177 residues: Large ribosomal subunit protein uL6 (177 aa).

This sequence belongs to the universal ribosomal protein uL6 family. As to quaternary structure, part of the 50S ribosomal subunit.

In terms of biological role, this protein binds to the 23S rRNA, and is important in its secondary structure. It is located near the subunit interface in the base of the L7/L12 stalk, and near the tRNA binding site of the peptidyltransferase center. The chain is Large ribosomal subunit protein uL6 from Colwellia psychrerythraea (strain 34H / ATCC BAA-681) (Vibrio psychroerythus).